Consider the following 232-residue polypeptide: Ashwin (232 aa).

Phosphoserine occurs at positions 112, 182, 184, 189, and 193. The disordered stretch occupies residues 163–232 (KMEHNNNDTQ…KRKIQHVTWP (70 aa)). A phosphothreonine mark is found at Thr197 and Thr198. Basic and acidic residues predominate over residues 206–224 (APKEEAEATNHLKPPEVKR).

The protein belongs to the ashwin family. In terms of assembly, component of the tRNA-splicing ligase complex.

It localises to the nucleus. This Mus musculus (Mouse) protein is Ashwin.